A 203-amino-acid chain; its full sequence is Hydra actinoporin-like toxin 2 (203 aa).

The first 21 residues, 1–21 (MLSYLCFGCFLVSASLEIACG), serve as a signal peptide directing secretion. Residues 175–177 (RGG) carry the Cell attachment site motif.

It belongs to the actinoporin family. HALT subfamily. As to quaternary structure, octamer or nonamer in membranes. Monomer in the soluble state. In vitro, interacts with folate receptor alpha (of target organism). As to expression, strongly expressed in the gland and mucous cells in the endoderm.

It is found in the nematocyst. It localises to the secreted. Its subcellular location is the target cell membrane. Pore-forming protein that forms hydrophilic pores and causes cytolysis. Compared to equinatoxin-2 (AC P61914), it reveals lower cytolysis activity (5-12-fold difference, tested on erythrocytes), a larger pore size (probably 2-3 nm) and different affinity to membrane lipids (100-fold lower affinity to sphingomyelin). Binds to sulfatides (SFT). Shows cytolytic activity on HeLa cells, with a different potency than its paralogs (from most potent to less potent: HALT-4&gt;HALT-6~HALT-1&gt;HALT-3&gt;HALT-7&gt;HALT-2). Pore formation is a multi-step process that involves specific recognition of membrane lipid by a protein aromatic residues rich region, firm binding to the membrane (mainly driven by hydrophobic interactions) accompanied by the transfer of the N-terminal region to the lipid-water interface and finally pore formation after oligomerization of monomers. In vitro, binds to the folate receptor alpha (FOLR1), a GPI-anchored membrane protein that plays a major role in the uptake of folate/folic acid into cells via endocytosis, suggesting a possible involvement of this receptor in the mechanism of HALT-1-induced cell lysis. In vivo, does not cause visible paralysis in larvae of the blowfly Sarcophaga faculata, the most common arthropod prey of Hydra. In Hydra vulgaris (Hydra), this protein is Hydra actinoporin-like toxin 2.